A 269-amino-acid polypeptide reads, in one-letter code: Acyl-CoA-binding domain-containing protein 4 (269 aa).

The 90-residue stretch at 12-101 folds into the ACB domain; sequence CQKQFQAAVS…MKLVAQKVID (90 aa). An acyl-CoA contacts are provided by residues 23–32, 43–47, Lys-69, and Tyr-88; these read IQNLPKNGSY and YSYYK. Disordered regions lie at residues 150–175, 195–226, and 248–269; these read GAVS…PRDL, EQRA…QCSA, and VALP…SAAN. The segment covering 156-167 has biased composition (pro residues); it reads PCLPKEPAPPSP. Phosphoserine occurs at positions 166 and 171.

Binds medium- and long-chain acyl-CoA esters and may function as an intracellular carrier of acyl-CoA esters. The polypeptide is Acyl-CoA-binding domain-containing protein 4 (ACBD4) (Pongo abelii (Sumatran orangutan)).